The following is a 411-amino-acid chain: MTKFFFKRLQTAPLDQEVSSLDASDYYYRIAFFLGWTPPKGALLRWIYSLWTLTTMWLGIVYLPLGLSLTYVKHFDRFTPTEFLTSLQVDINCIGNVIKSCVTYSQMWRFRRMNELISSLDKRCVTTTQRRIFHKMVARVNLIVILFLSTYLGFCFLTLFTSVFAGKAPWQLYNPLVDWRKGHWQLWIASILEYCVVSIGTMQELMSDTYAIVFISLFRCHLAILRDRIANLRQDPKLSEMEHYEQMVACIQDHRTIIQCSQIIRPILSITIFAQFMLVGIDLGLAAISILFFPNTIWTIMANVSFIVAICTESFPCCMLCEHLIEDSVHVSNALFHSNWITADRSYKSAVLYFLHRAQQPIQFTAGSIFPISVQSNIAVAKFAFTIITIVNQMNLGEKFFSDRSNGDINP.

Over 1–46 (MTKFFFKRLQTAPLDQEVSSLDASDYYYRIAFFLGWTPPKGALLRW) the chain is Cytoplasmic. A helical transmembrane segment spans residues 47–67 (IYSLWTLTTMWLGIVYLPLGL). Residues 68–86 (SLTYVKHFDRFTPTEFLTS) lie on the Extracellular side of the membrane. A helical transmembrane segment spans residues 87–107 (LQVDINCIGNVIKSCVTYSQM). Residues 108–139 (WRFRRMNELISSLDKRCVTTTQRRIFHKMVAR) are Cytoplasmic-facing. A helical membrane pass occupies residues 140–160 (VNLIVILFLSTYLGFCFLTLF). The Extracellular portion of the chain corresponds to 161-185 (TSVFAGKAPWQLYNPLVDWRKGHWQ). The helical transmembrane segment at 186–206 (LWIASILEYCVVSIGTMQELM) threads the bilayer. Over 207 to 271 (SDTYAIVFIS…QIIRPILSIT (65 aa)) the chain is Cytoplasmic. The chain crosses the membrane as a helical span at residues 272–292 (IFAQFMLVGIDLGLAAISILF). The Extracellular portion of the chain corresponds to 293 to 296 (FPNT). A helical membrane pass occupies residues 297-317 (IWTIMANVSFIVAICTESFPC). Residues 318-369 (CMLCEHLIEDSVHVSNALFHSNWITADRSYKSAVLYFLHRAQQPIQFTAGSI) are Cytoplasmic-facing. A helical transmembrane segment spans residues 370–390 (FPISVQSNIAVAKFAFTIITI). At 391–411 (VNQMNLGEKFFSDRSNGDINP) the chain is on the extracellular side.

This sequence belongs to the insect chemoreceptor superfamily. Heteromeric odorant receptor channel (TC 1.A.69) family. Or2a subfamily. Interacts with Orco. Complexes exist early in the endomembrane system in olfactory sensory neurons (OSNs), coupling these complexes to the conserved ciliary trafficking pathway. As to expression, expressed in olfactory sensory neurons in the maxillary palp.

It is found in the cell membrane. Its function is as follows. Odorant receptor which mediates acceptance or avoidance behavior, depending on its substrates. The odorant receptor repertoire encodes a large collection of odor stimuli that vary widely in identity, intensity, and duration. May form a complex with Orco to form odorant-sensing units, providing sensitive and prolonged odorant signaling and calcium permeability. This chain is Putative odorant receptor 59c (Or59c), found in Drosophila melanogaster (Fruit fly).